The following is a 348-amino-acid chain: Trace amine-associated receptor 9 (348 aa).

Residues 1-33 lie on the Extracellular side of the membrane; it reads MTSDFSPEPPMELCYENVNGSCIKSSYAPWPRA. The N-linked (GlcNAc...) asparagine glycan is linked to Asn-19. 2 cysteine pairs are disulfide-bonded: Cys-22–Cys-186 and Cys-105–Cys-190. A helical transmembrane segment spans residues 34–58; that stretch reads ILYGVLGLGALLAVFGNLLVIIAIL. Residues 59–68 are Cytoplasmic-facing; it reads HFKQLHTPTN. The chain crosses the membrane as a helical span at residues 69-90; that stretch reads FLVASLACADFLVGVTVMPFST. The Extracellular portion of the chain corresponds to 91 to 105; that stretch reads VRSVESCWYFGESYC. A helical transmembrane segment spans residues 106–128; the sequence is KFHTCFDTSFCFASLFHLCCISI. Residues Asp-112 and Thr-113 each contribute to the spermidine site. Topologically, residues 129-148 are cytoplasmic; that stretch reads DRYIAVTDPLTYPTKFTVSV. The chain crosses the membrane as a helical span at residues 149–170; that stretch reads SGLCIALSWFFSVTYSFSIFYT. The Extracellular portion of the chain corresponds to 171–196; that stretch reads GANEEGIEELVVALTCVGGCQAPLNQ. The segment at 174-187 is extracellular Loop 2 (ECL2); it reads EEGIEELVVALTCV. Residues 197-218 form a helical membrane-spanning segment; that stretch reads NWVLLCFLLFFLPTVVMVFLYG. The Cytoplasmic portion of the chain corresponds to 219 to 256; that stretch reads RIFLVAKYQARKIEGTANQAQASSESYKERVAKRERKA. Residues 257-280 traverse the membrane as a helical segment; it reads AKTLGIAMAAFLVSWLPYIIDAVI. Residues 281-293 are Extracellular-facing; it reads DAYMNFITPAYVY. Residues 294–314 form a helical membrane-spanning segment; it reads EILVWCVYYNSAMNPLIYAFF. Residues 315–348 lie on the Cytoplasmic side of the membrane; the sequence is YPWFRKAIKLIVSGKVFRADSSTTNLFSEEAGAG.

Belongs to the G-protein coupled receptor 1 family. As to expression, specifically expressed in neurons of the olfactory epithelium.

It is found in the cell membrane. Functionally, olfactory receptor specific for trace amines, such as triethylamine, N,N-dimethylcyclohexylamine (DMCHA), beta-phenylethylamine (beta-PEA), cadaverine (CAD) and polyamines such as spermine and spermidine. Trace amine compounds are enriched in animal body fluids and act on trace amine-associated receptors (TAARs) to elicit both intraspecific and interspecific innate behaviors. Trace amine-binding causes a conformation change that triggers signaling via G(s)-class of G alpha proteins (GNAL or GNAS). In mature olfactory sensory neurons, Taar9 is coupled with GNAL/G(olf)G alpha protein and mediates activation of adenylate cyclase activity to activate cAMP signaling and eventually transmit odorant signals to achieve membrane depolarization. In immature olfactory sensory neurons, Taar9 is coupled with GNAS/G(s) G alpha proteins. The chain is Trace amine-associated receptor 9 from Mus musculus (Mouse).